Consider the following 745-residue polypeptide: Probable copper-transporting ATPase PacS (745 aa).

Residues 1–94 are Cytoplasmic-facing; that stretch reads MAQTINLQLE…PVFSAKLVTG (94 aa). Residues 3 to 68 form the HMA domain; it reads QTINLQLEGM…AVERAGYHAR (66 aa). C14 and C17 together coordinate a metal cation. The helical transmembrane segment at 95–115 threads the bilayer; it reads LVISAVLFFGSLPMMLGVNIP. Residues 116 to 125 are Extracellular-facing; sequence HFPHIFHDPW. Residues 126-145 traverse the membrane as a helical segment; it reads LQWLLATPVQFWSGAEFYRG. Residues 146–152 are Cytoplasmic-facing; sequence AWKSVRT. Residues 153–173 traverse the membrane as a helical segment; that stretch reads RSATMDTLVALGTSAAYFYSV. Topologically, residues 174–193 are extracellular; sequence AITLFPQWLTSQGLAAHVYF. A helical transmembrane segment spans residues 194-214; the sequence is EAAAVVITLILLGRSLEQRAR. The Cytoplasmic portion of the chain corresponds to 215 to 342; that stretch reads RETSAAIRKL…KAPIQHFVDR (128 aa). A helical transmembrane segment spans residues 343–365; the sequence is ITHWFVPTVIVVAIAAFCIWWLT. The Extracellular portion of the chain corresponds to 366 to 372; the sequence is TGNITLA. A helical transmembrane segment spans residues 373 to 390; sequence VLTLVEVLIIACPCALGL. Topologically, residues 391-543 are cytoplasmic; that stretch reads ATPTSVMVGT…QAQQWEKEQK (153 aa). The 4-aspartylphosphate intermediate role is filled by D428. Residues 544 to 564 traverse the membrane as a helical segment; it reads TVIWLAVDTEVKALLAIADAI. The Extracellular segment spans residues 565–687; it reads KPSSPQVVQA…KLSRATMGNI (123 aa). Mg(2+)-binding residues include D633 and D637. A helical membrane pass occupies residues 688 to 707; it reads RQNLFFAFIYNVIGIPVAAG. The Cytoplasmic segment spans residues 708 to 719; it reads LFYPLFGLLLNP. Residues 720–738 form a helical membrane-spanning segment; sequence ILAGAAMAFSSVSVVTNAL. The Extracellular portion of the chain corresponds to 739 to 745; the sequence is RLKKFCP.

This sequence belongs to the cation transport ATPase (P-type) (TC 3.A.3) family. Type IB subfamily.

It is found in the cell membrane. It carries out the reaction Cu(+)(in) + ATP + H2O = Cu(+)(out) + ADP + phosphate + H(+). Functionally, may play a role in the osmotic adaptation. This is Probable copper-transporting ATPase PacS (pacS) from Synechocystis sp. (strain ATCC 27184 / PCC 6803 / Kazusa).